The following is a 346-amino-acid chain: Uroporphyrinogen decarboxylase (346 aa).

Residues 26–30, D76, Y153, S208, and H323 each bind substrate; that span reads RQAGR.

This sequence belongs to the uroporphyrinogen decarboxylase family. As to quaternary structure, homodimer.

The protein localises to the cytoplasm. The catalysed reaction is uroporphyrinogen III + 4 H(+) = coproporphyrinogen III + 4 CO2. The protein operates within porphyrin-containing compound metabolism; protoporphyrin-IX biosynthesis; coproporphyrinogen-III from 5-aminolevulinate: step 4/4. Catalyzes the decarboxylation of four acetate groups of uroporphyrinogen-III to yield coproporphyrinogen-III. This chain is Uroporphyrinogen decarboxylase, found in Prochlorococcus marinus (strain MIT 9301).